The primary structure comprises 223 residues: Killer cell lectin-like receptor subfamily B member 1B allele A (223 aa).

Topologically, residues 1 to 45 are cytoplasmic; the sequence is MDTAVVYADLHLARTGEPKREPPPSLSPDTCQCPRWHRLALKLGC. An ITIM motif motif is present at residues 5–10; the sequence is VVYADL. An LCK-binding motif motif is present at residues 31–34; sequence CQCP. A helical; Signal-anchor for type II membrane protein membrane pass occupies residues 46 to 66; that stretch reads ACLILLVLSVIGLGVLVLTLL. Topologically, residues 67–223 are extracellular; the sequence is QKPLIQNSPA…LKRESTCNDS (157 aa). Positions 101-211 constitute a C-type lectin domain; it reads HQDKCFHVSQ…CDSDNIWICQ (111 aa). Cystine bridges form between Cys-122/Cys-210 and Cys-189/Cys-202.

In terms of assembly, homodimer; disulfide-linked. Interacts with tyrosine kinase LCK. Binds PTPN6/SHP-1 in a phosphorylation-dependent manner. Expressed in a subset of natural killer cells.

Its subcellular location is the membrane. Functionally, receptor for CLEC2D/OCIL. Ligand-binding contributes to inhibition of cytotoxic natural killer (NK) cells. May mediate MHC class I-independent 'missing-self' recognition of allografts, tumor cells and virus-infected cells. This is Killer cell lectin-like receptor subfamily B member 1B allele A from Rattus norvegicus (Rat).